A 1167-amino-acid chain; its full sequence is Melanoma receptor tyrosine-protein kinase (1167 aa).

Residues 1 to 25 (MEFLRGGAALLQLLLVLSISRCCST) form the signal peptide. The Extracellular segment spans residues 26–642 (DPDRKVCQGT…GCRGDIVSHS (617 aa)). Residues asparagine 114, asparagine 144, and asparagine 201 are each glycosylated (N-linked (GlcNAc...) asparagine). Intrachain disulfides connect cysteine 195–cysteine 204, cysteine 199–cysteine 212, cysteine 220–cysteine 228, cysteine 224–cysteine 236, cysteine 237–cysteine 245, cysteine 241–cysteine 253, cysteine 256–cysteine 265, cysteine 269–cysteine 296, cysteine 300–cysteine 311, cysteine 315–cysteine 330, and cysteine 333–cysteine 337. Asparagine 356, asparagine 365, asparagine 398, asparagine 417, and asparagine 501 each carry an N-linked (GlcNAc...) asparagine glycan. Disulfide bonds link cysteine 504–cysteine 513, cysteine 508–cysteine 521, cysteine 524–cysteine 533, cysteine 537–cysteine 553, cysteine 556–cysteine 569, cysteine 560–cysteine 577, cysteine 593–cysteine 615, cysteine 618–cysteine 626, and cysteine 622–cysteine 634. Asparagine 576 is a glycosylation site (N-linked (GlcNAc...) asparagine). Asparagine 621 carries an N-linked (GlcNAc...) asparagine glycan. The helical transmembrane segment at 643–665 (SLAVGLVSGLLITVIVALLIVVL) threads the bilayer. At 666–1167 (LRRRRIKRKR…QGGALYTPVR (502 aa)) the chain is on the cytoplasmic side. A Protein kinase domain is found at 710 to 977 (FKKDRVLGSG…QMARDPSRYL (268 aa)). ATP contacts are provided by residues 716 to 724 (LGSGAFGTV) and lysine 743. Catalysis depends on aspartate 835, which acts as the Proton acceptor.

It belongs to the protein kinase superfamily. Tyr protein kinase family. EGF receptor subfamily.

It localises to the membrane. The enzyme catalyses L-tyrosyl-[protein] + ATP = O-phospho-L-tyrosyl-[protein] + ADP + H(+). Functionally, probable receptor with tyrosine-protein kinase activity. The polypeptide is Melanoma receptor tyrosine-protein kinase (xmrk) (Xiphophorus maculatus (Southern platyfish)).